We begin with the raw amino-acid sequence, 91 residues long: MANSPSAKKRAKQAEKRRSHNASLRSMVRTYIKNVVKAIDAKDLDKAKTAYTAAVPVIDRMADKGIIHKNKAARHKSRLNAHIKALGTAAA.

The disordered stretch occupies residues 1–25 (MANSPSAKKRAKQAEKRRSHNASLR). Basic residues predominate over residues 7–20 (AKKRAKQAEKRRSH).

The protein belongs to the bacterial ribosomal protein bS20 family.

Functionally, binds directly to 16S ribosomal RNA. This is Small ribosomal subunit protein bS20 from Azotobacter vinelandii (strain DJ / ATCC BAA-1303).